We begin with the raw amino-acid sequence, 751 residues long: Semaphorin-3C (751 aa).

Positions 1–21 are cleaved as a signal peptide; that stretch reads MAFQAVCILVGVFVCSTYVKG. Residues 28-511 enclose the Sema domain; that stretch reads RVYLTFDELR…SNEGLAQVSL (484 aa). Asn-81 carries N-linked (GlcNAc...) asparagine glycosylation. A disulfide bridge links Cys-101 with Cys-112. N-linked (GlcNAc...) asparagine glycosylation occurs at Asn-123. Disulfide bonds link Cys-130/Cys-139, Cys-266/Cys-378, and Cys-290/Cys-338. Asn-268 carries an N-linked (GlcNAc...) asparagine glycan. Asn-465 is a glycosylation site (N-linked (GlcNAc...) asparagine). Cysteines 514 and 532 form a disulfide. An Ig-like C2-type domain is found at 571–655; it reads AYRNAAEIVQ…TENSFKQTIA (85 aa). Residues Asn-585 and Asn-586 are each glycosylated (N-linked (GlcNAc...) asparagine). A disulfide bridge links Cys-592 with Cys-643. Basic and acidic residues predominate over residues 712-731; it reads TRQQHQQGEESQKMRGDYGK. The interval 712–751 is disordered; sequence TRQQHQQGEESQKMRGDYGKLKALINSRKSRNRRNQLPES.

Belongs to the semaphorin family. In terms of assembly, interacts with PLXND1.

The protein localises to the secreted. Binds to plexin family members and plays an important role in the regulation of developmental processes. Required for normal cardiovascular development during embryogenesis. Functions as attractant for growing axons, and thereby plays an important role in axon growth and axon guidance. The protein is Semaphorin-3C (SEMA3C) of Bos taurus (Bovine).